The chain runs to 330 residues: Glycine betaine/proline betaine-binding periplasmic protein (330 aa).

The signal sequence occupies residues 1–21 (MRHSVLFATAFATLISTQTFA). Residues Trp86, His90, and 161–163 (WGC) contribute to the substrate site. Cys157 and Cys163 are oxidised to a cystine.

The complex is composed of two ATP-binding proteins (ProV), two transmembrane proteins (ProW) and a solute-binding protein (ProX).

Its subcellular location is the periplasm. Part of the ProU ABC transporter complex involved in glycine betaine and proline betaine uptake. Binds glycine betaine and proline betaine with high affinity. The protein is Glycine betaine/proline betaine-binding periplasmic protein of Escherichia coli (strain K12).